The chain runs to 361 residues: Phosphoserine aminotransferase (361 aa).

An L-glutamate-binding site is contributed by arginine 42. Pyridoxal 5'-phosphate is bound by residues 76–77 (AT), tryptophan 102, threonine 152, aspartate 172, and glutamine 195. At lysine 196 the chain carries N6-(pyridoxal phosphate)lysine. 237 to 238 (NT) provides a ligand contact to pyridoxal 5'-phosphate.

It belongs to the class-V pyridoxal-phosphate-dependent aminotransferase family. SerC subfamily. As to quaternary structure, homodimer. Pyridoxal 5'-phosphate serves as cofactor.

The protein resides in the cytoplasm. The catalysed reaction is O-phospho-L-serine + 2-oxoglutarate = 3-phosphooxypyruvate + L-glutamate. The enzyme catalyses 4-(phosphooxy)-L-threonine + 2-oxoglutarate = (R)-3-hydroxy-2-oxo-4-phosphooxybutanoate + L-glutamate. Its pathway is amino-acid biosynthesis; L-serine biosynthesis; L-serine from 3-phospho-D-glycerate: step 2/3. It participates in cofactor biosynthesis; pyridoxine 5'-phosphate biosynthesis; pyridoxine 5'-phosphate from D-erythrose 4-phosphate: step 3/5. Catalyzes the reversible conversion of 3-phosphohydroxypyruvate to phosphoserine and of 3-hydroxy-2-oxo-4-phosphonooxybutanoate to phosphohydroxythreonine. This is Phosphoserine aminotransferase from Xanthomonas oryzae pv. oryzae (strain MAFF 311018).